Here is a 287-residue protein sequence, read N- to C-terminus: MSTSNYINSFAPAKINLGLRIFGKRKDGYHELQTLMAPISIGDRIEITLLSSGIEFESTGDFDVPKDSSNLALKAALLFLSHHGLKTGLRIKLTKIVPPGAGLGGGSSDAAAVLFSLNRMLAIDETMENLIRLAAQLGSDVPFFLLRKPALCTGRGEILHPTSSFPYPRKGLLIYPGFPVSTPWAYKTYDELCKKGLILPSPSQESDKPVNDLEEAVFSKYLWLPAVKKWIQSHFNPEVCLMSGSGSSVFALFSKEDPRFFNDLIQQAQAYLGPGCWIRLFEILEQF.

K14 is an active-site residue. 98–108 (PPGAGLGGGSS) provides a ligand contact to ATP. Residue D140 is part of the active site.

Belongs to the GHMP kinase family. IspE subfamily.

The catalysed reaction is 4-CDP-2-C-methyl-D-erythritol + ATP = 4-CDP-2-C-methyl-D-erythritol 2-phosphate + ADP + H(+). The protein operates within isoprenoid biosynthesis; isopentenyl diphosphate biosynthesis via DXP pathway; isopentenyl diphosphate from 1-deoxy-D-xylulose 5-phosphate: step 3/6. Its function is as follows. Catalyzes the phosphorylation of the position 2 hydroxy group of 4-diphosphocytidyl-2C-methyl-D-erythritol. The protein is 4-diphosphocytidyl-2-C-methyl-D-erythritol kinase of Methylacidiphilum infernorum (isolate V4) (Methylokorus infernorum (strain V4)).